The primary structure comprises 801 residues: Elongation factor G, mitochondrial (801 aa).

The N-terminal 24 residues, 1 to 24, are a transit peptide targeting the mitochondrion; sequence MRCPSLARLPHRAISGLTRLPVRL. Residues 99-386 form the tr-type G domain; that stretch reads SRIRNIGIAA…GVIDYLPNPS (288 aa). GTP is bound by residues 108–115, 184–188, and 238–241; these read AHIDSGKT, DTPGH, and NKMD.

It belongs to the TRAFAC class translation factor GTPase superfamily. Classic translation factor GTPase family. EF-G/EF-2 subfamily.

Its subcellular location is the mitochondrion. Its pathway is protein biosynthesis; polypeptide chain elongation. Its function is as follows. Mitochondrial GTPase that catalyzes the GTP-dependent ribosomal translocation step during translation elongation. During this step, the ribosome changes from the pre-translocational (PRE) to the post-translocational (POST) state as the newly formed A-site-bound peptidyl-tRNA and P-site-bound deacylated tRNA move to the P and E sites, respectively. Catalyzes the coordinated movement of the two tRNA molecules, the mRNA and conformational changes in the ribosome. The chain is Elongation factor G, mitochondrial (mef1) from Aspergillus clavatus (strain ATCC 1007 / CBS 513.65 / DSM 816 / NCTC 3887 / NRRL 1 / QM 1276 / 107).